Consider the following 536-residue polypeptide: CTP synthase (536 aa).

Positions 1 to 267 (MTKFIFVTGG…DDIVIKRLQL (267 aa)) are amidoligase domain. Residue Ser-13 participates in CTP binding. Ser-13 is a UTP binding site. ATP is bound at residue 14–19 (SLGKGI). Tyr-54 is a binding site for L-glutamine. Asp-71 contributes to the ATP binding site. The Mg(2+) site is built by Asp-71 and Glu-141. CTP contacts are provided by residues 148 to 150 (DIE), 188 to 193 (KTKPTQ), and Lys-224. UTP contacts are provided by residues 188 to 193 (KTKPTQ) and Lys-224. 240–242 (RDA) contributes to the ATP binding site. The Glutamine amidotransferase type-1 domain maps to 293–535 (TIGLVGKYVS…IEASLKYQQN (243 aa)). Gly-355 is an L-glutamine binding site. Cys-382 serves as the catalytic Nucleophile; for glutamine hydrolysis. L-glutamine-binding positions include 383–386 (LGMQ), Glu-406, and Arg-463. Residues His-508 and Glu-510 contribute to the active site.

It belongs to the CTP synthase family. Homotetramer.

The catalysed reaction is UTP + L-glutamine + ATP + H2O = CTP + L-glutamate + ADP + phosphate + 2 H(+). The enzyme catalyses L-glutamine + H2O = L-glutamate + NH4(+). It catalyses the reaction UTP + NH4(+) + ATP = CTP + ADP + phosphate + 2 H(+). The protein operates within pyrimidine metabolism; CTP biosynthesis via de novo pathway; CTP from UDP: step 2/2. With respect to regulation, allosterically activated by GTP, when glutamine is the substrate; GTP has no effect on the reaction when ammonia is the substrate. The allosteric effector GTP functions by stabilizing the protein conformation that binds the tetrahedral intermediate(s) formed during glutamine hydrolysis. Inhibited by the product CTP, via allosteric rather than competitive inhibition. Its function is as follows. Catalyzes the ATP-dependent amination of UTP to CTP with either L-glutamine or ammonia as the source of nitrogen. Regulates intracellular CTP levels through interactions with the four ribonucleotide triphosphates. This chain is CTP synthase, found in Staphylococcus aureus (strain COL).